Consider the following 107-residue polypeptide: Nucleoid-associated protein MCA1327 (107 aa).

The protein belongs to the YbaB/EbfC family. Homodimer.

The protein resides in the cytoplasm. The protein localises to the nucleoid. Its function is as follows. Binds to DNA and alters its conformation. May be involved in regulation of gene expression, nucleoid organization and DNA protection. The chain is Nucleoid-associated protein MCA1327 from Methylococcus capsulatus (strain ATCC 33009 / NCIMB 11132 / Bath).